We begin with the raw amino-acid sequence, 1432 residues long: Superkiller protein 3 (1432 aa).

TPR repeat units follow at residues 4 to 37 (IKQL…DPDN) and 47 to 80 (ALSS…VPDN). The segment at 339-397 (SANKPPEGHKKTEKETDIKDVDETNEDEVKDRVEDEVKDRVEDEVKDQDEEAKEDEEED) is disordered. Residues 344-381 (PEGHKKTEKETDIKDVDETNEDEVKDRVEDEVKDRVED) show a composition bias toward basic and acidic residues. Positions 382–397 (EVKDQDEEAKEDEEED) are enriched in acidic residues. 9 TPR repeats span residues 425 to 458 (ILAH…IAYN), 471 to 507 (REFS…DFSN), 508 to 541 (IQAK…SPNN), 627 to 661 (APGF…DAGD), 702 to 735 (NWPF…DPND), 736 to 769 (VESW…RPSH), 945 to 985 (ASYW…QSNT), 987 to 1018 (ETWI…EPKA), and 1226 to 1259 (ISNH…SKDS).

This sequence belongs to the SKI3 family. Component of the SKI complex composed of at least SKI2, SKI3 and SKI8. The SKI complex interacts with SKI7, which makes the link between the SKI complex and the exosome in order to perform mRNA degradation.

It is found in the cytoplasm. The protein localises to the nucleus. In terms of biological role, component of the SKI complex involved in 3'-mRNA degradation pathway. Represses dsRNA virus propagation by specifically blocking translation of viral mRNAs, perhaps recognizing the absence of CAP or poly(A). Essential for cell growth only in the presence of M1 replicon. This chain is Superkiller protein 3 (SKI3), found in Saccharomyces cerevisiae (strain ATCC 204508 / S288c) (Baker's yeast).